Consider the following 103-residue polypeptide: ATP synthase F(0) complex subunit g, mitochondrial (103 aa).

Alanine 2 is subject to N-acetylalanine. 4 positions are modified to N6-acetyllysine: lysine 11, lysine 24, lysine 35, and lysine 54.

It belongs to the ATPase g subunit family. As to quaternary structure, component of the ATP synthase complex composed at least of ATP5F1A/subunit alpha, ATP5F1B/subunit beta, ATP5MC1/subunit c (homooctomer), MT-ATP6/subunit a, MT-ATP8/subunit 8, ATP5ME/subunit e, ATP5MF/subunit f, ATP5MG/subunit g, ATP5MK/subunit k, ATP5MJ/subunit j, ATP5F1C/subunit gamma, ATP5F1D/subunit delta, ATP5F1E/subunit epsilon, ATP5PF/subunit F6, ATP5PB/subunit b, ATP5PD/subunit d, ATP5PO/subunit OSCP. ATP synthase complex consists of a soluble F(1) head domain (subunits alpha(3) and beta(3)) - the catalytic core - and a membrane F(0) domain - the membrane proton channel (subunits c, a, 8, e, f, g, k and j). These two domains are linked by a central stalk (subunits gamma, delta, and epsilon) rotating inside the F1 region and a stationary peripheral stalk (subunits F6, b, d, and OSCP).

The protein localises to the mitochondrion. Its subcellular location is the mitochondrion inner membrane. In terms of biological role, subunit g, of the mitochondrial membrane ATP synthase complex (F(1)F(0) ATP synthase or Complex V) that produces ATP from ADP in the presence of a proton gradient across the membrane which is generated by electron transport complexes of the respiratory chain. ATP synthase complex consist of a soluble F(1) head domain - the catalytic core - and a membrane F(1) domain - the membrane proton channel. These two domains are linked by a central stalk rotating inside the F(1) region and a stationary peripheral stalk. During catalysis, ATP synthesis in the catalytic domain of F(1) is coupled via a rotary mechanism of the central stalk subunits to proton translocation. In vivo, can only synthesize ATP although its ATP hydrolase activity can be activated artificially in vitro. Part of the complex F(0) domain. This chain is ATP synthase F(0) complex subunit g, mitochondrial, found in Mus musculus (Mouse).